Here is a 218-residue protein sequence, read N- to C-terminus: UPF0177 protein YaiF (218 aa).

Helical transmembrane passes span 8–28 (SIII…AVFL), 48–68 (FIIL…KCGF), 81–101 (ILLI…VVQF), 123–143 (ILSS…APIL), and 163–183 (FFLS…DILG).

This sequence belongs to the UPF0177 family.

The protein localises to the cell membrane. This is UPF0177 protein YaiF (yaiF) from Lactococcus lactis subsp. lactis (strain IL1403) (Streptococcus lactis).